A 613-amino-acid polypeptide reads, in one-letter code: Activating transcription factor 3 (613 aa).

Disordered stretches follow at residues 77-115 and 133-218; these read RHFN…PSVQ and KRKL…NKIA. The segment covering 85 to 105 has biased composition (low complexity); it reads GQSHSQDSSHSSCSGSPLDSP. Residues 138–147 show a composition bias toward polar residues; sequence TCDSSSGSEQ. Residues 158 to 175 are compositionally biased toward low complexity; that stretch reads NHNGHSGSSNNYSGSMSN. Over residues 178–191 the composition is skewed to acidic residues; the sequence is DLDDDCEESSDDDS. In terms of domain architecture, bZIP spans 205-268; it reads EDRRRRRRER…QKLVDMLKSH (64 aa). The interval 207 to 229 is basic motif; it reads RRRRRRERNKIAATKCRMKKRER. The tract at residues 233 to 261 is leucine-zipper; the sequence is LIKESEVLDTQNVELKNQVRQLETERQKL. Residues 337-446 form a disordered region; sequence PNGYCKPSPS…SSNATSSTTP (110 aa). The segment covering 356-368 has biased composition (low complexity); the sequence is QQQQQQQQQQQPQ. A compositionally biased stretch (polar residues) spans 369–389; sequence SLNPAGNNVIDQQHANPSPSL. The segment covering 402-446 has biased composition (low complexity); it reads GSASNHPSHNNNNNNNNSSGASSNTSNNNSNISSHSSNATSSTTP.

It belongs to the bZIP family. ATF subfamily. In terms of assembly, interacts with Jra/jun; the interaction enhances the DNA-binding activity of Atf3. Moderate expression in some regions of the larval nervous system, the ring gland and imaginal disks. High expression in larval gut, excretory malpighian tubules, salivary glands, and, to a lesser extent, the fat body where levels are approximately 2.5-fold less than the gut.

It localises to the nucleus. Transcription factor which binds to the cAMP response element (CRE). Regulates metabolic and innate immune homeostasis, possibly by controlling appropriate expression of genes involved in peritrophic matrix composition and ensuring the normal digestive and immune function of the gut. Required for the expression of odorant receptors Or43b and Or47b. The sequence is that of Activating transcription factor 3 from Drosophila melanogaster (Fruit fly).